We begin with the raw amino-acid sequence, 312 residues long: DNA-directed RNA polymerase subunit alpha (312 aa).

Positions 1-229 (MLQYQIDRID…ELFQPLATVT (229 aa)) are alpha N-terminal domain (alpha-NTD). The alpha C-terminal domain (alpha-CTD) stretch occupies residues 240–312 (PSPEAQIPLE…ISIPQSRTSV (73 aa)).

The protein belongs to the RNA polymerase alpha chain family. In terms of assembly, in cyanobacteria the RNAP catalytic core is composed of 2 alpha, 1 beta, 1 beta', 1 gamma and 1 omega subunit. When a sigma factor is associated with the core the holoenzyme is formed, which can initiate transcription.

It carries out the reaction RNA(n) + a ribonucleoside 5'-triphosphate = RNA(n+1) + diphosphate. Its function is as follows. DNA-dependent RNA polymerase catalyzes the transcription of DNA into RNA using the four ribonucleoside triphosphates as substrates. The chain is DNA-directed RNA polymerase subunit alpha from Prochlorococcus marinus (strain AS9601).